The following is a 169-amino-acid chain: Peptide deformylase 1 (169 aa).

2 residues coordinate Fe cation: cysteine 93 and histidine 135. The active site involves glutamate 136. Histidine 139 lines the Fe cation pocket.

Belongs to the polypeptide deformylase family. It depends on Fe(2+) as a cofactor.

The catalysed reaction is N-terminal N-formyl-L-methionyl-[peptide] + H2O = N-terminal L-methionyl-[peptide] + formate. Removes the formyl group from the N-terminal Met of newly synthesized proteins. Requires at least a dipeptide for an efficient rate of reaction. N-terminal L-methionine is a prerequisite for activity but the enzyme has broad specificity at other positions. In Corynebacterium efficiens (strain DSM 44549 / YS-314 / AJ 12310 / JCM 11189 / NBRC 100395), this protein is Peptide deformylase 1.